The sequence spans 369 residues: 3-dehydroquinate synthase (369 aa).

NAD(+)-binding positions include 75–80 (DGEEHK), 109–113 (GVIGD), 133–134 (TT), Lys-146, Lys-155, and 173–176 (TLKT). Residues Glu-188, His-251, and His-268 each contribute to the Zn(2+) site.

The protein belongs to the sugar phosphate cyclases superfamily. Dehydroquinate synthase family. It depends on Co(2+) as a cofactor. Requires Zn(2+) as cofactor. NAD(+) is required as a cofactor.

It localises to the cytoplasm. It carries out the reaction 7-phospho-2-dehydro-3-deoxy-D-arabino-heptonate = 3-dehydroquinate + phosphate. The protein operates within metabolic intermediate biosynthesis; chorismate biosynthesis; chorismate from D-erythrose 4-phosphate and phosphoenolpyruvate: step 2/7. In terms of biological role, catalyzes the conversion of 3-deoxy-D-arabino-heptulosonate 7-phosphate (DAHP) to dehydroquinate (DHQ). This chain is 3-dehydroquinate synthase, found in Legionella pneumophila subsp. pneumophila (strain Philadelphia 1 / ATCC 33152 / DSM 7513).